The primary structure comprises 129 residues: Small ribosomal subunit protein uS13 (129 aa).

Residues 95 to 114 (NLPVRGQRTKTNARTRRGPR) are compositionally biased toward basic residues. The interval 95 to 129 (NLPVRGQRTKTNARTRRGPRKTVAGRGQKRGATKK) is disordered.

Belongs to the universal ribosomal protein uS13 family. As to quaternary structure, part of the 30S ribosomal subunit. Forms a loose heterodimer with protein S19. Forms two bridges to the 50S subunit in the 70S ribosome.

Located at the top of the head of the 30S subunit, it contacts several helices of the 16S rRNA. In the 70S ribosome it contacts the 23S rRNA (bridge B1a) and protein L5 of the 50S subunit (bridge B1b), connecting the 2 subunits; these bridges are implicated in subunit movement. Contacts the tRNAs in the A and P-sites. This chain is Small ribosomal subunit protein uS13, found in Dehalococcoides mccartyi (strain ATCC BAA-2100 / JCM 16839 / KCTC 5957 / BAV1).